A 229-amino-acid chain; its full sequence is Sugar fermentation stimulation protein homolog (229 aa).

This sequence belongs to the SfsA family.

The protein is Sugar fermentation stimulation protein homolog of Clostridium novyi (strain NT).